A 328-amino-acid polypeptide reads, in one-letter code: Malate dehydrogenase (328 aa).

Gly-13–Ala-19 serves as a coordination point for NAD(+). 2 residues coordinate substrate: Arg-94 and Arg-100. NAD(+)-binding positions include Asn-107, Gln-114, and Val-131–Asn-133. Substrate is bound by residues Asn-133 and Arg-164. Catalysis depends on His-189, which acts as the Proton acceptor.

Belongs to the LDH/MDH superfamily. MDH type 2 family.

The catalysed reaction is (S)-malate + NAD(+) = oxaloacetate + NADH + H(+). Its function is as follows. Catalyzes the reversible oxidation of malate to oxaloacetate. This chain is Malate dehydrogenase, found in Chlamydia felis (strain Fe/C-56) (Chlamydophila felis).